A 569-amino-acid polypeptide reads, in one-letter code: Urease subunit alpha (569 aa).

Positions 131 to 569 constitute a Urease domain; that stretch reads GGIDTHIHFI…LPLAQRYLLL (439 aa). Residues His136, His138, and Lys219 each contribute to the Ni(2+) site. Lys219 bears the N6-carboxylysine mark. Residue His221 participates in substrate binding. 2 residues coordinate Ni(2+): His248 and His274. His322 functions as the Proton donor in the catalytic mechanism. Asp362 provides a ligand contact to Ni(2+).

The protein belongs to the metallo-dependent hydrolases superfamily. Urease alpha subunit family. As to quaternary structure, heterotrimer of UreA (gamma), UreB (beta) and UreC (alpha) subunits. Three heterotrimers associate to form the active enzyme. Requires Ni cation as cofactor. Post-translationally, carboxylation allows a single lysine to coordinate two nickel ions.

Its subcellular location is the cytoplasm. It carries out the reaction urea + 2 H2O + H(+) = hydrogencarbonate + 2 NH4(+). It functions in the pathway nitrogen metabolism; urea degradation; CO(2) and NH(3) from urea (urease route): step 1/1. The chain is Urease subunit alpha from Parasynechococcus marenigrum (strain WH8102).